The following is a 756-amino-acid chain: Serine/threonine-protein kinase DCLK1 (756 aa).

Serine 32 and serine 36 each carry phosphoserine. Position 46 is a phosphothreonine (threonine 46). Doublecortin domains lie at 57-143 (KKVR…LEYT) and 186-269 (KLVT…QDDF). Residues 288–393 (ASASRRGTTK…QRGWRREESE (106 aa)) are disordered. A compositionally biased stretch (low complexity) spans 297-313 (KSPGPSRRSKSPASTSS). Phosphoserine occurs at positions 305, 307, 330, 332, 334, 337, 347, 352, 353, 355, 358, 362, and 364. Residues 347–364 (SQHGGSSTSLSSTKVCSS) show a composition bias toward low complexity. Positions 366–375 (DENDGPGEGD) are enriched in acidic residues. Serine 392 is subject to Phosphoserine. The Protein kinase domain maps to 406–663 (YKVGRTIGDG…AVQVLEHPWV (258 aa)). ATP-binding positions include 412–420 (IGDGNFAVV) and lysine 435. Catalysis depends on aspartate 527, which acts as the Proton acceptor. The residue at position 536 (tyrosine 536) is a Phosphotyrosine. Residues 711 to 723 (QVFRRRRNQDVRS) are compositionally biased toward basic and acidic residues. Positions 711–756 (QVFRRRRNQDVRSRYKAQPAPPELNSESEDYSPSSSETVRSPNSPF) are disordered. Residues serine 742, serine 751, and serine 754 each carry the phosphoserine modification.

This sequence belongs to the protein kinase superfamily. CAMK Ser/Thr protein kinase family. CaMK subfamily.

It carries out the reaction L-seryl-[protein] + ATP = O-phospho-L-seryl-[protein] + ADP + H(+). The catalysed reaction is L-threonyl-[protein] + ATP = O-phospho-L-threonyl-[protein] + ADP + H(+). In terms of biological role, probable kinase that may be involved in a calcium-signaling pathway controlling neuronal migration in the developing brain. May also participate in functions of the mature nervous system. The protein is Serine/threonine-protein kinase DCLK1 (Dclk1) of Mus musculus (Mouse).